A 125-amino-acid polypeptide reads, in one-letter code: Neuraminyllactose-binding hemagglutinin (125 aa).

Residues lysine 92–lysine 97 are N-acetyl-neuraminyl-alpha(2,3)-lactose binding motif.

The protein resides in the cell outer membrane. The polypeptide is Neuraminyllactose-binding hemagglutinin (hpaA) (Helicobacter acinonychis (Helicobacter acinonyx)).